The chain runs to 687 residues: Auxin response factor 14 (687 aa).

The TF-B3 DNA-binding region spans 133-235 (FCKTLTASDT…QLRLGVRRAV (103 aa)).

This sequence belongs to the ARF family. As to quaternary structure, homo and heterodimers. In terms of tissue distribution, expressed in roots, culms, leaves and young panicles.

Its subcellular location is the nucleus. Functionally, auxin response factors (ARFs) are transcriptional factors that bind specifically to the DNA sequence 5'-TGTCTC-3' found in the auxin-responsive promoter elements (AuxREs). This Oryza sativa subsp. japonica (Rice) protein is Auxin response factor 14 (ARF14).